The primary structure comprises 256 residues: MQWQDHAIILGVKRHGETSVIAEVMTRDRGRHLGLVRSGRSRAMQPVLQAGNAVEVIWRARLDEHLGEFRVEPVTLRAARLMETATAVYGVQAMGALLRLLPERDPHPHLFDALEVILDHLHNPADAGELFVRFELAVLNDLGFGLDLAECAATGARSDLAYVSPKSGRAVSRSAGAPWADKMLLLPPFLGIEGNHAADFDSLSAAFRLTGFFLHRHVYEPRGIEAAAARDGFVQAALKALNPALRTLSGPNDISA.

The protein belongs to the RecO family.

Involved in DNA repair and RecF pathway recombination. This chain is DNA repair protein RecO, found in Rhizobium leguminosarum bv. trifolii (strain WSM2304).